The chain runs to 198 residues: NADH-quinone oxidoreductase subunit I (198 aa).

4Fe-4S ferredoxin-type domains are found at residues 42–72 (LNRW…VEGA) and 88–117 (RVYE…MTND). Residues cysteine 52, cysteine 55, cysteine 58, cysteine 62, cysteine 97, cysteine 100, cysteine 103, and cysteine 107 each coordinate [4Fe-4S] cluster. The segment at 137-198 (APLKEGMEQP…DTQHKDEEAA (62 aa)) is disordered. Basic and acidic residues predominate over residues 182–198 (AHRDDDNDTQHKDEEAA).

This sequence belongs to the complex I 23 kDa subunit family. As to quaternary structure, NDH-1 is composed of 14 different subunits. Subunits NuoA, H, J, K, L, M, N constitute the membrane sector of the complex. It depends on [4Fe-4S] cluster as a cofactor.

Its subcellular location is the cell membrane. It carries out the reaction a quinone + NADH + 5 H(+)(in) = a quinol + NAD(+) + 4 H(+)(out). NDH-1 shuttles electrons from NADH, via FMN and iron-sulfur (Fe-S) centers, to quinones in the respiratory chain. The immediate electron acceptor for the enzyme in this species is believed to be ubiquinone. Couples the redox reaction to proton translocation (for every two electrons transferred, four hydrogen ions are translocated across the cytoplasmic membrane), and thus conserves the redox energy in a proton gradient. The protein is NADH-quinone oxidoreductase subunit I of Cutibacterium acnes (strain DSM 16379 / KPA171202) (Propionibacterium acnes).